A 78-amino-acid chain; its full sequence is Large ribosomal subunit protein bL28B (78 aa).

Residues 1–29 (MSAHCQVTGRKPGFGNTVSHSHRRSRRRW) form a disordered region. Residues 20–29 (HSHRRSRRRW) are compositionally biased toward basic residues.

The protein belongs to the bacterial ribosomal protein bL28 family.

This Mycobacterium bovis (strain ATCC BAA-935 / AF2122/97) protein is Large ribosomal subunit protein bL28B (rpmB2).